The chain runs to 314 residues: Methionyl-tRNA formyltransferase (314 aa).

113–116 contacts (6S)-5,6,7,8-tetrahydrofolate; sequence SLLP.

The protein belongs to the Fmt family.

The enzyme catalyses L-methionyl-tRNA(fMet) + (6R)-10-formyltetrahydrofolate = N-formyl-L-methionyl-tRNA(fMet) + (6S)-5,6,7,8-tetrahydrofolate + H(+). Attaches a formyl group to the free amino group of methionyl-tRNA(fMet). The formyl group appears to play a dual role in the initiator identity of N-formylmethionyl-tRNA by promoting its recognition by IF2 and preventing the misappropriation of this tRNA by the elongation apparatus. This is Methionyl-tRNA formyltransferase from Pseudomonas savastanoi pv. phaseolicola (strain 1448A / Race 6) (Pseudomonas syringae pv. phaseolicola (strain 1448A / Race 6)).